Reading from the N-terminus, the 445-residue chain is Chromosome partition protein MukF (445 aa).

Positions leucine 213–isoleucine 241 are leucine-zipper.

Belongs to the MukF family. As to quaternary structure, interacts, and probably forms a ternary complex, with MukE and MukB via its C-terminal region. The complex formation is stimulated by calcium or magnesium. It is required for an interaction between MukE and MukB.

It localises to the cytoplasm. The protein localises to the nucleoid. Involved in chromosome condensation, segregation and cell cycle progression. May participate in facilitating chromosome segregation by condensation DNA from both sides of a centrally located replisome during cell division. Not required for mini-F plasmid partitioning. Probably acts via its interaction with MukB and MukE. Overexpression results in anucleate cells. It has a calcium binding activity. The chain is Chromosome partition protein MukF from Vibrio vulnificus (strain YJ016).